We begin with the raw amino-acid sequence, 396 residues long: Acetylornithine aminotransferase 2 (396 aa).

Residues 102-103 (GA) and phenylalanine 134 contribute to the pyridoxal 5'-phosphate site. Arginine 137 provides a ligand contact to N(2)-acetyl-L-ornithine. A pyridoxal 5'-phosphate-binding site is contributed by 219–222 (DEVQ). Lysine 248 is modified (N6-(pyridoxal phosphate)lysine). Threonine 276 is a binding site for pyridoxal 5'-phosphate.

This sequence belongs to the class-III pyridoxal-phosphate-dependent aminotransferase family. ArgD subfamily. In terms of assembly, homodimer. The cofactor is pyridoxal 5'-phosphate.

The protein localises to the cytoplasm. The catalysed reaction is N(2)-acetyl-L-ornithine + 2-oxoglutarate = N-acetyl-L-glutamate 5-semialdehyde + L-glutamate. The protein operates within amino-acid biosynthesis; L-arginine biosynthesis; N(2)-acetyl-L-ornithine from L-glutamate: step 4/4. In Bordetella parapertussis (strain 12822 / ATCC BAA-587 / NCTC 13253), this protein is Acetylornithine aminotransferase 2.